A 378-amino-acid chain; its full sequence is Chorismate synthase (378 aa).

Residues 42–61 (IQAELDRRRPGQSPITTPRQ) are disordered. Arg-49 contacts NADP(+). Residues 126 to 128 (RAS), Gly-287, 302 to 306 (KPTAT), and Arg-328 contribute to the FMN site.

It belongs to the chorismate synthase family. Homotetramer. Requires FMNH2 as cofactor.

It catalyses the reaction 5-O-(1-carboxyvinyl)-3-phosphoshikimate = chorismate + phosphate. It functions in the pathway metabolic intermediate biosynthesis; chorismate biosynthesis; chorismate from D-erythrose 4-phosphate and phosphoenolpyruvate: step 7/7. Its function is as follows. Catalyzes the anti-1,4-elimination of the C-3 phosphate and the C-6 proR hydrogen from 5-enolpyruvylshikimate-3-phosphate (EPSP) to yield chorismate, which is the branch point compound that serves as the starting substrate for the three terminal pathways of aromatic amino acid biosynthesis. This reaction introduces a second double bond into the aromatic ring system. The protein is Chorismate synthase of Synechococcus sp. (strain JA-2-3B'a(2-13)) (Cyanobacteria bacterium Yellowstone B-Prime).